Here is a 195-residue protein sequence, read N- to C-terminus: Probable GTP-binding protein EngB (195 aa).

In terms of domain architecture, EngB-type G spans 22–195 (QLPEIALAGR…WSALSRYIKR (174 aa)). Residues 30–37 (GRSNVGKS), 57–61 (GKTQT), 75–78 (DVPG), 142–145 (TKLD), and 174–176 (FSA) contribute to the GTP site. Positions 37 and 59 each coordinate Mg(2+).

This sequence belongs to the TRAFAC class TrmE-Era-EngA-EngB-Septin-like GTPase superfamily. EngB GTPase family. Mg(2+) serves as cofactor.

Necessary for normal cell division and for the maintenance of normal septation. The polypeptide is Probable GTP-binding protein EngB (Oceanobacillus iheyensis (strain DSM 14371 / CIP 107618 / JCM 11309 / KCTC 3954 / HTE831)).